Consider the following 511-residue polypeptide: 2-isopropylmalate synthase (511 aa).

A Pyruvate carboxyltransferase domain is found at 4–266 (IDIFDTTLRD…ETGIQLQEIK (263 aa)). Positions 13, 201, 203, and 237 each coordinate Mn(2+). Positions 392–511 (ELKMVQVQYG…IKESLRAHPV (120 aa)) are regulatory domain.

Belongs to the alpha-IPM synthase/homocitrate synthase family. LeuA type 1 subfamily. Homodimer. The cofactor is Mn(2+).

The protein resides in the cytoplasm. It catalyses the reaction 3-methyl-2-oxobutanoate + acetyl-CoA + H2O = (2S)-2-isopropylmalate + CoA + H(+). Its pathway is amino-acid biosynthesis; L-leucine biosynthesis; L-leucine from 3-methyl-2-oxobutanoate: step 1/4. Functionally, catalyzes the condensation of the acetyl group of acetyl-CoA with 3-methyl-2-oxobutanoate (2-ketoisovalerate) to form 3-carboxy-3-hydroxy-4-methylpentanoate (2-isopropylmalate). The polypeptide is 2-isopropylmalate synthase (Lysinibacillus sphaericus (strain C3-41)).